Reading from the N-terminus, the 2193-residue chain is Genome polyprotein (2193 aa).

Residues 1 to 22 (MGSQVSTQRSGSHENSNSATEG) are disordered. A lipid anchor (N-myristoyl glycine; by host) is attached at G2. Residues 2-1503 (GSQVSTQRSG…HLNRAVLVMQ (1502 aa)) lie on the Cytoplasmic side of the membrane. Amphipathic alpha-helix stretches follow at residues 566–588 (GDRV…LTQA) and 568–588 (RVAD…LTQA). Active-site for protease 2A activity residues include H883 and D901. Residues C918 and C920 each contribute to the Zn(2+) site. C972 serves as the catalytic For protease 2A activity. Zn(2+) contacts are provided by C978 and H980. Residues 1112–1184 (SASWLKKFND…EQSAASQEDL (73 aa)) are membrane-binding. Residues 1112-1250 (SASWLKKFND…SPGTGKSLAT (139 aa)) are oligomerization. The segment at 1133–1137 (SNKIS) is RNA-binding. The SF3 helicase domain maps to 1216-1374 (EKRMNNYMQF…YKTDLGRLDA (159 aa)). 1240–1247 (GSPGTGKS) provides a ligand contact to ATP. Positions 1381, 1392, 1393, and 1397 each coordinate Zn(2+). A C4-type; degenerate zinc finger spans residues 1381-1397 (CSENNTANFKRCSPLVC). The RNA-binding stretch occupies residues 1424–1431 (EYSNRSAI). Residues 1435–1440 (IEALFQ) are oligomerization. Residues 1504–1519 (SIATVVAVVSLVYVIY) lie within the membrane without spanning it. Residues 1520 to 2193 (KLFAGFQGAY…NLRRNWLELF (674 aa)) are Cytoplasmic-facing. Y1529 is modified (O-(5'-phospho-RNA)-tyrosine). The Peptidase C3 domain occupies 1549–1727 (GPSLDFALSL…FCAGLKRSYF (179 aa)). Active-site for protease 3C activity residues include H1588, E1619, and C1695. One can recognise a RdRp catalytic domain in the interval 1958-2073 (GSLFAFDYSG…ASYPFPIDCL (116 aa)). Mg(2+) contacts are provided by D1964 and D2060.

The protein belongs to the picornaviruses polyprotein family. As to quaternary structure, interacts with capsid protein VP1 and capsid protein VP3 to form heterotrimeric protomers. In terms of assembly, interacts with capsid protein VP0, and capsid protein VP3 to form heterotrimeric protomers. Five protomers subsequently associate to form pentamers which serve as building blocks for the capsid. Interacts with capsid protein VP2, capsid protein VP3 and capsid protein VP4 following cleavage of capsid protein VP0. Interacts with host SCARB2. Interacts with host ARF6; this interaction mediates viral endocytosis. Interacts with capsid protein VP1 and capsid protein VP3 in the mature capsid. Interacts with host SCARB2. As to quaternary structure, interacts with capsid protein VP0 and capsid protein VP1 to form heterotrimeric protomers. Five protomers subsequently associate to form pentamers which serve as building blocks for the capsid. Interacts with capsid protein VP4 in the mature capsid. Interacts with protein 2C; this interaction may be important for virion morphogenesis. In terms of assembly, interacts with capsid protein VP1 and capsid protein VP3. Homodimer. As to quaternary structure, interacts with host BAX; this interaction activates the mitochondrial apoptotic pathway. Interacts with host ILF2. In terms of assembly, homohexamer; forms a hexameric ring structure with 6-fold symmetry characteristic of AAA+ ATPases. Interacts (via N-terminus) with host RTN3 (via reticulon domain); this interaction is important for viral replication. Interacts with capsid protein VP3; this interaction may be important for virion morphogenesis. Interacts with protein 3CD. As to quaternary structure, homodimer. Interacts with host GBF1. Interacts (via GOLD domain) with host ACBD3 (via GOLD domain); this interaction allows the formation of a viral protein 3A/ACBD3 heterotetramer with a 2:2 stoichiometry, which will stimulate the recruitment of host PI4KB in order to synthesize PI4P at the viral RNA replication sites. In terms of assembly, interacts with RNA-directed RNA polymerase. Interacts with host IFIH1/MDA5; this interaction inhibits host IFIH1. Interacts with host RIGI. As to quaternary structure, interacts with protein 3AB and with RNA-directed RNA polymerase. In terms of assembly, interacts with Viral protein genome-linked and with protein 3CD. It depends on Mg(2+) as a cofactor. In terms of processing, specific enzymatic cleavages in vivo by the viral proteases yield processing intermediates and the mature proteins. Myristoylation is required for the formation of pentamers during virus assembly. Further assembly of 12 pentamers and a molecule of genomic RNA generates the provirion. Post-translationally, during virion maturation, immature virions are rendered infectious following cleavage of VP0 into VP4 and VP2. This maturation seems to be an autocatalytic event triggered by the presence of RNA in the capsid and it is followed by a conformational change infectious virion. In terms of processing, myristoylation is required during RNA encapsidation and formation of the mature virus particle. VPg is uridylylated by the polymerase into VPg-pUpU. This acts as a nucleotide-peptide primer for the genomic RNA replication.

It localises to the virion. The protein resides in the host cytoplasm. The protein localises to the host cytoplasmic vesicle membrane. It is found in the host nucleus. The catalysed reaction is a ribonucleoside 5'-triphosphate + H2O = a ribonucleoside 5'-diphosphate + phosphate + H(+). It catalyses the reaction Selective cleavage of Tyr-|-Gly bond in the picornavirus polyprotein.. It carries out the reaction RNA(n) + a ribonucleoside 5'-triphosphate = RNA(n+1) + diphosphate. The enzyme catalyses Selective cleavage of Gln-|-Gly bond in the poliovirus polyprotein. In other picornavirus reactions Glu may be substituted for Gln, and Ser or Thr for Gly.. With respect to regulation, replication or transcription is subject to high level of random mutations by the nucleotide analog ribavirin. Forms an icosahedral capsid of pseudo T=3 symmetry with capsid proteins VP2 and VP3. The capsid is 300 Angstroms in diameter, composed of 60 copies of each capsid protein and enclosing the viral positive strand RNA genome. Capsid protein VP1 mainly forms the vertices of the capsid. Capsid protein VP1, together with VP2, interacts with host cell receptor SCARB2 to provide virion attachment to target host cells. This attachment induces virion internalization. This attachment induces virion internalization. After binding to its receptor, the capsid undergoes conformational changes. Capsid protein VP1 N-terminus (that contains an amphipathic alpha-helix) and capsid protein VP4 are externalized. Together, they shape a pore in the host membrane through which viral genome is translocated to host cell cytoplasm. Functionally, forms an icosahedral capsid of pseudo T=3 symmetry with capsid proteins VP2 and VP3. The capsid is 300 Angstroms in diameter, composed of 60 copies of each capsid protein and enclosing the viral positive strand RNA genome. Capsid protein VP2, together with VP1, interacts with host cell receptor SCARB2 to provide virion attachment to target host cells. In terms of biological role, forms an icosahedral capsid of pseudo T=3 symmetry with capsid proteins VP2 and VP3. The capsid is 300 Angstroms in diameter, composed of 60 copies of each capsid protein and enclosing the viral positive strand RNA genome. Its function is as follows. Lies on the inner surface of the capsid shell. After binding to the host receptor, the capsid undergoes conformational changes. Capsid protein VP4 is released, Capsid protein VP1 N-terminus is externalized, and together, they shape a pore in the host membrane through which the viral genome is translocated into the host cell cytoplasm. Component of immature procapsids, which is cleaved into capsid proteins VP4 and VP2 after maturation. Allows the capsid to remain inactive before the maturation step. Functionally, cysteine protease that cleaves viral polyprotein and specific host proteins. It is responsible for the autocatalytic cleavage between the P1 and P2 regions, which is the first cleavage occurring in the polyprotein. Also cleaves the host translation initiation factor EIF4G1, in order to shut down the capped cellular mRNA translation. Inhibits the host nucleus-cytoplasm protein and RNA trafficking by cleaving host members of the nuclear pores. Counteracts stress granule formation probably by antagonizing its assembly or promoting its dissassembly. Cleaves and inhibits host IFIH1/MDA5, thereby inhibiting the type-I IFN production and the establishment of the antiviral state. Cleaves and inhibits host MAVS, thereby inhibiting the type-I IFN production and the establishment of the antiviral state. In terms of biological role, plays an essential role in the virus replication cycle by acting as a viroporin. Creates a pore in the host endoplasmic reticulum and as a consequence releases Ca2+ in the cytoplasm of infected cell. In turn, high levels of cytoplasmic calcium may trigger membrane trafficking and transport of viral ER-associated proteins to viroplasms, sites of viral genome replication. Also activates the mitochondrial apoptotic pathway by activating host BAX. Its function is as follows. Induces and associates with structural rearrangements of intracellular membranes. Displays RNA-binding, nucleotide binding and NTPase activities. May play a role in virion morphogenesis and viral RNA encapsidation by interacting with the capsid protein VP3. Localizes the viral replication complex to the surface of membranous vesicles. Together with protein 3CD binds the Cis-Active RNA Element (CRE) which is involved in RNA synthesis initiation. Acts as a cofactor to stimulate the activity of 3D polymerase, maybe through a nucleid acid chaperone activity. Functionally, localizes the viral replication complex to the surface of membranous vesicles. It inhibits host cell endoplasmic reticulum-to-Golgi apparatus transport and causes the disassembly of the Golgi complex, possibly through GBF1 interaction. This would result in depletion of MHC, trail receptors and IFN receptors at the host cell surface. Plays an essential role in viral RNA replication by recruiting ACBD3 and PI4KB at the viral replication sites, thereby allowing the formation of the rearranged membranous structures where viral replication takes place. In terms of biological role, acts as a primer for viral RNA replication and remains covalently bound to viral genomic RNA. VPg is uridylylated prior to priming replication into VPg-pUpU. The oriI viral genomic sequence may act as a template for this. The VPg-pUpU is then used as primer on the genomic RNA poly(A) by the RNA-dependent RNA polymerase to replicate the viral genome. During genome replication, the VPg-RNA linkage is removed by the host TDP2, thereby accelerating replication. During the late stage of the replication cycle, host TDP2 is excluded from sites of viral RNA synthesis and encapsidation, allowing for the generation of progeny virions. Its function is as follows. Involved in the viral replication complex and viral polypeptide maturation. It exhibits protease activity with a specificity and catalytic efficiency that is different from protease 3C. Protein 3CD lacks polymerase activity. Protein 3CD binds to the 5'UTR of the viral genome. Major viral protease that mediates proteolytic processing of the polyprotein. Cleaves host EIF5B, contributing to host translation shutoff. Also cleaves host PABPC1, contributing to host translation shutoff. Disassembles host cytoplasmic stress granules by cleaving host G3BP1, although this effect is less prononced than the inhibition induced by protease 2A. Cleaves host RIGI and thus contributes to the inhibition of type I interferon production. Cleaves host IRF7 and thus contributes to the inhibition of type I interferon production. Cleaves host HNRNPA1 thereby increasing the translation of apoptosis protease activating factor APAF1, leading to apoptosis of the host cell. Cleaves host NLRP1, triggers host N-glycine-mediated degradation of the autoinhibitory NLRP1 N-terminal fragment. Functionally, replicates the viral genomic RNA on the surface of intracellular membranes. May form linear arrays of subunits that propagate along a strong head-to-tail interaction called interface-I. Covalently attaches UMP to a tyrosine of VPg, which is used to prime RNA synthesis. The positive stranded RNA genome is first replicated at virus induced membranous vesicles, creating a dsRNA genomic replication form. This dsRNA is then used as template to synthesize positive stranded RNA genomes. ss(+)RNA genomes are either translated, replicated or encapsidated. The chain is Genome polyprotein from Homo sapiens (Human).